Consider the following 704-residue polypeptide: Polyribonucleotide nucleotidyltransferase (704 aa).

Residues Asp488 and Asp494 each contribute to the Mg(2+) site. A KH domain is found at Pro555–Ile614. The S1 motif domain maps to Gly624 to Lys692.

The protein belongs to the polyribonucleotide nucleotidyltransferase family. As to quaternary structure, component of the RNA degradosome, which is a multiprotein complex involved in RNA processing and mRNA degradation. Requires Mg(2+) as cofactor.

The protein resides in the cytoplasm. It carries out the reaction RNA(n+1) + phosphate = RNA(n) + a ribonucleoside 5'-diphosphate. Involved in mRNA degradation. Catalyzes the phosphorolysis of single-stranded polyribonucleotides processively in the 3'- to 5'-direction. The sequence is that of Polyribonucleotide nucleotidyltransferase from Shewanella pealeana (strain ATCC 700345 / ANG-SQ1).